Consider the following 200-residue polypeptide: Cell division protein SepF (200 aa).

Disordered stretches follow at residues 35–60 (NLYQ…RWRE) and 170–200 (LHEV…RMAQ). A compositionally biased stretch (polar residues) spans 183-200 (PTGSPNQTWGNETNRMAQ).

Belongs to the SepF family. Homodimer. Interacts with FtsZ.

Its subcellular location is the cytoplasm. In terms of biological role, cell division protein that is part of the divisome complex and is recruited early to the Z-ring. Probably stimulates Z-ring formation, perhaps through the cross-linking of FtsZ protofilaments. Its function overlaps with FtsA. The chain is Cell division protein SepF from Nostoc punctiforme (strain ATCC 29133 / PCC 73102).